The following is a 244-amino-acid chain: MSGYNEQFLKKNPLAILGVLRDLNKNQVPLRISWAHGQFISKILAVDPEKLIVDYGSQEYENSAVLRAGQVAIIAETQGAKVEFTLPQLVTGEYQRLPAFITPLPSSLWFVQRREYFRIGAPLYPPYYGVTTLPDTRTLRFRLFDLSLGGMGALLESAIPDGLIEGARFSQVELNMGQWGIFHVDAQLISISERKVIDGKNETITTPRLSFRFLNVSPAVERELQRIIFSLEREARERANKVRE.

Residues 112 to 230 (QRREYFRIGA…ERELQRIIFS (119 aa)) form the PilZ domain.

The protein belongs to the YcgR family. Monomer. Interacts with the flagellar basal bodies.

The protein localises to the bacterial flagellum basal body. Its function is as follows. Acts as a flagellar brake, regulating swimming and swarming in a bis-(3'-5') cyclic diguanylic acid (c-di-GMP)-dependent manner. Overexpression of this gene decreases swimming and swarming motility; those cells that are motile turn predominantly counterclockwise. The D-118 mutant is still able to bind FliM but no longer affects motility upon overexpression. Binds 1 c-di-GMP dimer per subunit. In Salmonella typhimurium (strain LT2 / SGSC1412 / ATCC 700720), this protein is Flagellar brake protein YcgR (ycgR).